A 92-amino-acid chain; its full sequence is Small ribosomal subunit protein uS19c (92 aa).

The protein belongs to the universal ribosomal protein uS19 family.

It is found in the plastid. Its subcellular location is the chloroplast. Protein S19 forms a complex with S13 that binds strongly to the 16S ribosomal RNA. The chain is Small ribosomal subunit protein uS19c (rps19) from Pisum sativum (Garden pea).